The primary structure comprises 375 residues: Leucoanthocyanidin dioxygenase 1 (375 aa).

One can recognise a Fe2OG dioxygenase domain in the interval 218–317 (LLLQLKINYY…RLSWVVFCEP (100 aa)). Residues His242, Asp244, and His298 each coordinate Fe cation. Arg308 serves as a coordination point for 2-oxoglutarate.

This sequence belongs to the iron/ascorbate-dependent oxidoreductase family. L-ascorbate is required as a cofactor. The cofactor is Fe(2+).

The enzyme catalyses a (2R,3S,4S)-leucoanthocyanidin + 2-oxoglutarate + O2 = a 4-H-anthocyanidin with a 3-hydroxy group + succinate + CO2 + 2 H2O. It participates in pigment biosynthesis; anthocyanin biosynthesis. Involved in anthocyanin and protoanthocyanidin biosynthesis by catalyzing the oxidation of leucoanthocyanidins into anthocyanidins. The protein is Leucoanthocyanidin dioxygenase 1 of Oryza sativa subsp. japonica (Rice).